The primary structure comprises 311 residues: Heme A synthase (311 aa).

Over 1-6 the chain is Cytoplasmic; it reads MQRFIK. A helical transmembrane segment spans residues 7-27; sequence WLAVITSLDLLVVLLGGALVT. Topologically, residues 28–62 are extracellular; that stretch reads KTGSGQGCGKSWPLCNGEFVPSNLSMETIIELSHR. Cysteines 35 and 42 form a disulfide. E58 is an active-site residue. H61 lines the heme o pocket. The helical transmembrane segment at 63–83 threads the bilayer; sequence LTSGSAGILVTLLCILSWKYY. The Cytoplasmic segment spans residues 84 to 91; that stretch reads KHVRETKT. Residues 92–112 traverse the membrane as a helical segment; it reads LAILSFVFLVAQALMGAAAVV. Over 113-121 the chain is Extracellular; it reads WGQMPAVLA. The helical transmembrane segment at 122–142 threads the bilayer; it reads IHFGISLISFASVILLTCLIF. H123 lines the heme o pocket. Residues 143 to 159 are Cytoplasmic-facing; the sequence is EIDQKFDARSLIMDKKM. The helical transmembrane segment at 160 to 180 threads the bilayer; that stretch reads KFHIYGVTIYSYIVVYTGALV. Over 181 to 211 the chain is Extracellular; the sequence is RHERATLACPDFPLCSKSRPMPTQLHEWVQM. A disulfide bridge links C189 with C195. Residues 212–232 traverse the membrane as a helical segment; sequence GHRVAAMLIFAWILYAMIIAI. H213 provides a ligand contact to heme b. The Cytoplasmic portion of the chain corresponds to 233-243; that stretch reads RHYKQQRVVYW. A helical transmembrane segment spans residues 244–264; sequence GWIISFILVTLQAIVGILVVF. At 265 to 271 the chain is on the extracellular side; sequence TNASLAM. The helical transmembrane segment at 272–292 threads the bilayer; that stretch reads ALLHSLFISCLFAVLCYLVMI. H275 is a binding site for heme b. The Cytoplasmic portion of the chain corresponds to 293-311; sequence GTRSTVNAKETESTSKQTK.

This sequence belongs to the COX15/CtaA family. Type 1 subfamily. As to quaternary structure, interacts with CtaB. Requires heme b as cofactor.

It localises to the cell membrane. The enzyme catalyses Fe(II)-heme o + 2 A + H2O = Fe(II)-heme a + 2 AH2. It functions in the pathway porphyrin-containing compound metabolism; heme A biosynthesis; heme A from heme O: step 1/1. Catalyzes the conversion of heme O to heme A by two successive hydroxylations of the methyl group at C8. The first hydroxylation forms heme I, the second hydroxylation results in an unstable dihydroxymethyl group, which spontaneously dehydrates, resulting in the formyl group of heme A. The sequence is that of Heme A synthase from Bacillus mycoides (strain KBAB4) (Bacillus weihenstephanensis).